We begin with the raw amino-acid sequence, 365 residues long: UDP-N-acetylglucosamine--N-acetylmuramyl-(pentapeptide) pyrophosphoryl-undecaprenol N-acetylglucosamine transferase (365 aa).

UDP-N-acetyl-alpha-D-glucosamine is bound by residues 17–19 (TGG), Asn129, Arg167, Ser194, Ile250, 269–274 (ALTVSE), and Gln295.

It belongs to the glycosyltransferase 28 family. MurG subfamily.

It is found in the cell inner membrane. The catalysed reaction is di-trans,octa-cis-undecaprenyl diphospho-N-acetyl-alpha-D-muramoyl-L-alanyl-D-glutamyl-meso-2,6-diaminopimeloyl-D-alanyl-D-alanine + UDP-N-acetyl-alpha-D-glucosamine = di-trans,octa-cis-undecaprenyl diphospho-[N-acetyl-alpha-D-glucosaminyl-(1-&gt;4)]-N-acetyl-alpha-D-muramoyl-L-alanyl-D-glutamyl-meso-2,6-diaminopimeloyl-D-alanyl-D-alanine + UDP + H(+). The protein operates within cell wall biogenesis; peptidoglycan biosynthesis. In terms of biological role, cell wall formation. Catalyzes the transfer of a GlcNAc subunit on undecaprenyl-pyrophosphoryl-MurNAc-pentapeptide (lipid intermediate I) to form undecaprenyl-pyrophosphoryl-MurNAc-(pentapeptide)GlcNAc (lipid intermediate II). In Shewanella sediminis (strain HAW-EB3), this protein is UDP-N-acetylglucosamine--N-acetylmuramyl-(pentapeptide) pyrophosphoryl-undecaprenol N-acetylglucosamine transferase.